Here is a 127-residue protein sequence, read N- to C-terminus: Protein ApaG (127 aa).

An ApaG domain is found at 3-127 (DDPRYRVEVE…FVLSVPRTLH (125 aa)).

This chain is Protein ApaG, found in Xanthomonas axonopodis pv. citri (strain 306).